The primary structure comprises 442 residues: UDP-glycosyltransferase 79B7 (442 aa).

Residues serine 260, 319 to 321, 336 to 344, and 358 to 361 each bind UDP-alpha-D-glucose; these read VQQ, HCGPGTIWE, and LSDQ.

This sequence belongs to the UDP-glycosyltransferase family.

This is UDP-glycosyltransferase 79B7 (UGT79B7) from Arabidopsis thaliana (Mouse-ear cress).